The primary structure comprises 495 residues: Telomere-binding protein subunit alpha (495 aa).

The span at 1-13 shows a compositional bias: polar residues; sequence MSTAAKQNRSTSR. Residues 1–31 form a disordered region; that stretch reads MSTAAKQNRSTSRVSKKKTAAPKEGAAKKSD.

This sequence belongs to the telombin family. As to quaternary structure, heterodimer of an alpha and a beta subunit.

Its subcellular location is the nucleus. It is found in the chromosome. The protein resides in the telomere. May function as protective capping of the single-stranded telomeric overhang. May also participate in telomere length regulation during DNA replication. Binds specifically to the T4G4-containing extension on the 3'strand and protects this region of the telomere from nuclease digestion and chemical modification. This chain is Telomere-binding protein subunit alpha (MAC-56A), found in Sterkiella nova (Ciliate).